Reading from the N-terminus, the 430-residue chain is Type 3 secretion system ATPase (430 aa).

162–167 (GCGKTF) is an ATP binding site.

It belongs to the ATPase alpha/beta chains family. T3SS ATPase subfamily. In terms of assembly, the core secretion machinery of the T3SS is composed of approximately 20 different proteins, including cytoplasmic components, a base, an export apparatus and a needle. This subunit is part of the cytosolic complex. Forms homohexamers. Interacts directly with MxiN/SctL (stator protein) and Spa13/SctO (stalk protein). Can form a soluble complex with Spa33/SctQ, MxiN/SctL and MxiK/SctK.

The protein resides in the cytoplasm. The catalysed reaction is ATP + H2O + cellular proteinSide 1 = ADP + phosphate + cellular proteinSide 2.. Its activity is regulated as follows. Oligomerization increases ATPase activity. Monomeric forms exhibit low-level ATPase activity by forming short-lived oligomers with active site contributions from at least two protomers. In contrast, oligomers exhibit enhanced ATP hydrolysis rates that likely result from multiple preformed active sites within the oligomeric complex. Oligomerization is important for both enzyme activation and T3SS function. Activity is regulated by MxiN/SctL, which differentially regulates the activity of the monomer and the oligomer: it up-regulates the ATPase activity of the monomer, while it down-regulates the activity of the oligomer. Its function is as follows. ATPase component of the type III secretion system (T3SS), also called injectisome, which is used to inject bacterial effector proteins into eukaryotic host cells. Acts as a molecular motor to provide the energy that is required for the export of proteins. Required for type III secretion apparatus (T3SA) formation, proper protein secretion, host cell invasion and virulence. May play a critical role in T3SS substrate recognition, disassembly of the effector/chaperone complex and unfolding of the effector in an ATP-dependent manner prior to secretion. This Shigella flexneri protein is Type 3 secretion system ATPase.